Here is a 254-residue protein sequence, read N- to C-terminus: Methyltransferase-like protein 23 (254 aa).

The segment at 1 to 27 is disordered; that stretch reads MKSFIFRQNPRKQQQEQNNLVDYSDSD. Residues 11–21 show a composition bias toward polar residues; it reads RKQQQEQNNLV.

Belongs to the methyltransferase superfamily. METTL23 family.

Functionally, probable methyltransferase. This chain is Methyltransferase-like protein 23, found in Dictyostelium discoideum (Social amoeba).